The sequence spans 591 residues: Probable translation initiation factor IF-2 (591 aa).

The region spanning leucine 7–glutamate 223 is the tr-type G domain. The segment at glycine 16–threonine 23 is G1. A GTP-binding site is contributed by glycine 16–threonine 23. The interval alanine 41–histidine 45 is G2. The segment at aspartate 78 to glycine 81 is G3. GTP contacts are provided by residues aspartate 78 to histidine 82 and asparagine 132 to aspartate 135. The segment at asparagine 132–aspartate 135 is G4. The segment at serine 200 to methionine 202 is G5.

It belongs to the TRAFAC class translation factor GTPase superfamily. Classic translation factor GTPase family. IF-2 subfamily.

Its function is as follows. Function in general translation initiation by promoting the binding of the formylmethionine-tRNA to ribosomes. Seems to function along with eIF-2. The polypeptide is Probable translation initiation factor IF-2 (Methanosarcina barkeri (strain Fusaro / DSM 804)).